A 90-amino-acid chain; its full sequence is Defensin-like protein 293 (90 aa).

The signal sequence occupies residues 1–26 (MTSRAKSLFIFFFLISCTFMLLETDA). 3 disulfides stabilise this stretch: C63/C83, C69/C88, and C75/C90.

It belongs to the DEFL family.

The protein resides in the secreted. This is Defensin-like protein 293 from Arabidopsis thaliana (Mouse-ear cress).